The sequence spans 209 residues: Glutathione S-transferase 1, isoform D (209 aa).

A GST N-terminal domain is found at 1–80 (MDFYYLPGSA…YLAEKYGKDD (80 aa)). Residues Ser9, 50 to 52 (HCI), and 64 to 66 (ESR) contribute to the glutathione site. Residues 86 to 207 (DPQKRAVVNQ…AGADEFKAKF (122 aa)) form the GST C-terminal domain.

This sequence belongs to the GST superfamily. Theta family. As to quaternary structure, homodimer.

It carries out the reaction RX + glutathione = an S-substituted glutathione + a halide anion + H(+). The enzyme catalyses 1,1,1-trichloro-2,2-bis(4-chlorophenyl)ethane = 1,1-dichloro-2,2-bis(4-chlorophenyl)ethylene + chloride + H(+). Its activity is regulated as follows. Inhibited by S-hexylglutathione. Functionally, conjugation of reduced glutathione to a wide number of exogenous and endogenous hydrophobic electrophiles. Has DDT dehydrochlorinase activity. This Anopheles gambiae (African malaria mosquito) protein is Glutathione S-transferase 1, isoform D (GstD1).